Here is a 441-residue protein sequence, read N- to C-terminus: Trigger factor (441 aa).

Positions 161-246 (GDQVTIDFVG…VSEVAEQILP (86 aa)) constitute a PPIase FKBP-type domain.

This sequence belongs to the FKBP-type PPIase family. Tig subfamily.

The protein localises to the cytoplasm. It catalyses the reaction [protein]-peptidylproline (omega=180) = [protein]-peptidylproline (omega=0). In terms of biological role, involved in protein export. Acts as a chaperone by maintaining the newly synthesized protein in an open conformation. Functions as a peptidyl-prolyl cis-trans isomerase. This is Trigger factor from Marinomonas sp. (strain MWYL1).